A 304-amino-acid chain; its full sequence is GMP synthase [glutamine-hydrolyzing] subunit B (304 aa).

The region spanning 2–183 (VKVEKFIPNA…LDLPEEICER (182 aa)) is the GMPS ATP-PPase domain. An ATP-binding site is contributed by 28-34 (SGGVDSS).

Heterodimer composed of a glutamine amidotransferase subunit (A) and a GMP-binding subunit (B).

It carries out the reaction XMP + L-glutamine + ATP + H2O = GMP + L-glutamate + AMP + diphosphate + 2 H(+). It participates in purine metabolism; GMP biosynthesis; GMP from XMP (L-Gln route): step 1/1. In terms of biological role, catalyzes the synthesis of GMP from XMP. The polypeptide is GMP synthase [glutamine-hydrolyzing] subunit B (Methanococcoides burtonii (strain DSM 6242 / NBRC 107633 / OCM 468 / ACE-M)).